The sequence spans 79 residues: Small ribosomal subunit protein uS17 (79 aa).

Belongs to the universal ribosomal protein uS17 family. As to quaternary structure, part of the 30S ribosomal subunit.

In terms of biological role, one of the primary rRNA binding proteins, it binds specifically to the 5'-end of 16S ribosomal RNA. The protein is Small ribosomal subunit protein uS17 of Rhodospirillum rubrum (strain ATCC 11170 / ATH 1.1.1 / DSM 467 / LMG 4362 / NCIMB 8255 / S1).